Consider the following 178-residue polypeptide: Inorganic pyrophosphatase (178 aa).

The substrate site is built by Lys30, Arg44, and Tyr56. Mg(2+) is bound by residues Asp66, Asp71, and Asp103. Tyr140 is a binding site for substrate.

Belongs to the PPase family. Homohexamer. Mg(2+) is required as a cofactor.

It is found in the cytoplasm. The catalysed reaction is diphosphate + H2O = 2 phosphate + H(+). In terms of biological role, catalyzes the hydrolysis of inorganic pyrophosphate (PPi) forming two phosphate ions. The chain is Inorganic pyrophosphatase from Thermococcus kodakarensis (strain ATCC BAA-918 / JCM 12380 / KOD1) (Pyrococcus kodakaraensis (strain KOD1)).